We begin with the raw amino-acid sequence, 320 residues long: UDP-3-O-acyl-N-acetylglucosamine deacetylase (320 aa).

The Zn(2+) site is built by His-92, His-251, and Asp-255. The Proton donor role is filled by His-278.

The protein belongs to the LpxC family. Zn(2+) serves as cofactor.

It catalyses the reaction a UDP-3-O-[(3R)-3-hydroxyacyl]-N-acetyl-alpha-D-glucosamine + H2O = a UDP-3-O-[(3R)-3-hydroxyacyl]-alpha-D-glucosamine + acetate. It functions in the pathway glycolipid biosynthesis; lipid IV(A) biosynthesis; lipid IV(A) from (3R)-3-hydroxytetradecanoyl-[acyl-carrier-protein] and UDP-N-acetyl-alpha-D-glucosamine: step 2/6. In terms of biological role, catalyzes the hydrolysis of UDP-3-O-myristoyl-N-acetylglucosamine to form UDP-3-O-myristoylglucosamine and acetate, the committed step in lipid A biosynthesis. The chain is UDP-3-O-acyl-N-acetylglucosamine deacetylase from Psychrobacter arcticus (strain DSM 17307 / VKM B-2377 / 273-4).